The following is an 882-amino-acid chain: Valine--tRNA ligase (882 aa).

The 'HIGH' region motif lies at 45-55; it reads PNVTGKLHLGH. The short motif at 519–523 is the 'KMSKS' region element; the sequence is KMSKS. Lysine 522 is an ATP binding site. Residues 808-882 are a coiled coil; it reads LADLLNVEEE…RIAEMHKLVK (75 aa).

The protein belongs to the class-I aminoacyl-tRNA synthetase family. ValS type 1 subfamily. Monomer.

Its subcellular location is the cytoplasm. The catalysed reaction is tRNA(Val) + L-valine + ATP = L-valyl-tRNA(Val) + AMP + diphosphate. Its function is as follows. Catalyzes the attachment of valine to tRNA(Val). As ValRS can inadvertently accommodate and process structurally similar amino acids such as threonine, to avoid such errors, it has a 'posttransfer' editing activity that hydrolyzes mischarged Thr-tRNA(Val) in a tRNA-dependent manner. In Streptococcus pyogenes serotype M18 (strain MGAS8232), this protein is Valine--tRNA ligase.